We begin with the raw amino-acid sequence, 97 residues long: MESAWSSRGTSLGSSDPQLQRFMEAEVQKQRVQLLIHHMTELCWEKCMDKPGPRLDGRAELCLVNCVERFIDTSQFILNRLEQTQKARPLFSERLSD.

A Twin CX3C motif motif is present at residues 43 to 66; that stretch reads CWEKCMDKPGPRLDGRAELCLVNC. Intrachain disulfides connect Cys-43–Cys-66 and Cys-47–Cys-62.

The protein belongs to the small Tim family. As to quaternary structure, heterohexamer; possibly composed of 3 copies of TIMM8AB and 3 copies of TIMM13.

The protein localises to the mitochondrion inner membrane. In terms of biological role, putative mitochondrial intermembrane chaperone that participates in the import and insertion of some multi-pass transmembrane proteins into the mitochondrial inner membrane. Also required for the transfer of beta-barrel precursors from the TOM complex to the sorting and assembly machinery (SAM complex) of the outer membrane. Acts as a chaperone-like protein that protects the hydrophobic precursors from aggregation and guide them through the mitochondrial intermembrane space. This is Putative mitochondrial import inner membrane translocase subunit Tim8 A-B (Timm8a2) from Mus musculus (Mouse).